Consider the following 265-residue polypeptide: Acrosomal protein SP-10 (265 aa).

A signal peptide spans 1 to 21; that stretch reads MNRFLLLMSLYLLGSARGTSS. Positions 62 to 181 are disordered; the sequence is LNTLSEHGSS…EQASGAPISS (120 aa). Tandem repeats lie at residues 66 to 70, 71 to 75, 85 to 88, 91 to 95, 110 to 114, 115 to 119, 120 to 123, 125 to 129, 135 to 139, 140 to 144, 145 to 148, 150 to 154, 155 to 159, 160 to 164, 165 to 168, and 170 to 174. A 3 X 5 AA repeats of S-E-H-[GA]-S region spans residues 66-95; the sequence is SEHGSSEHGSSKHTVAEHTSGEHAESEHAS. Over residues 69–110 the composition is skewed to basic and acidic residues; the sequence is GSSEHGSSKHTVAEHTSGEHAESEHASGEPAATEHAEGEHTV. A 4 X 4 AA repeats of S-G-E-H region spans residues 85–168; the sequence is SGEHAESEHA…ASGEQPSGEH (84 aa). A 9 X 5 AA repeats of [SV]-G-E-Q-[PSA] region spans residues 110–174; it reads VGEQPSGEQP…SGEHASGEQA (65 aa). Positions 152–163 are enriched in polar residues; that stretch reads EQPSGEQASGEQ. N-linked (GlcNAc...) asparagine glycosylation occurs at N258.

In terms of tissue distribution, testis.

The protein localises to the cytoplasmic vesicle. The protein resides in the secretory vesicle. Its subcellular location is the acrosome. This is Acrosomal protein SP-10 (ACRV1) from Homo sapiens (Human).